The sequence spans 296 residues: Lipoyl synthase (296 aa).

[4Fe-4S] cluster contacts are provided by Cys-37, Cys-42, Cys-48, Cys-63, Cys-67, Cys-70, and Ser-276. Residues 49-265 (WSKKHTTVMI…ERVAKTKGFL (217 aa)) enclose the Radical SAM core domain.

It belongs to the radical SAM superfamily. Lipoyl synthase family. The cofactor is [4Fe-4S] cluster.

Its subcellular location is the cytoplasm. It carries out the reaction [[Fe-S] cluster scaffold protein carrying a second [4Fe-4S](2+) cluster] + N(6)-octanoyl-L-lysyl-[protein] + 2 oxidized [2Fe-2S]-[ferredoxin] + 2 S-adenosyl-L-methionine + 4 H(+) = [[Fe-S] cluster scaffold protein] + N(6)-[(R)-dihydrolipoyl]-L-lysyl-[protein] + 4 Fe(3+) + 2 hydrogen sulfide + 2 5'-deoxyadenosine + 2 L-methionine + 2 reduced [2Fe-2S]-[ferredoxin]. The protein operates within protein modification; protein lipoylation via endogenous pathway; protein N(6)-(lipoyl)lysine from octanoyl-[acyl-carrier-protein]: step 2/2. In terms of biological role, catalyzes the radical-mediated insertion of two sulfur atoms into the C-6 and C-8 positions of the octanoyl moiety bound to the lipoyl domains of lipoate-dependent enzymes, thereby converting the octanoylated domains into lipoylated derivatives. The chain is Lipoyl synthase from Rickettsia peacockii (strain Rustic).